The primary structure comprises 205 residues: Large ribosomal subunit protein uL3 (205 aa).

The interval glycine 126–glycine 150 is disordered.

The protein belongs to the universal ribosomal protein uL3 family. Part of the 50S ribosomal subunit. Forms a cluster with proteins L14 and L19.

Its function is as follows. One of the primary rRNA binding proteins, it binds directly near the 3'-end of the 23S rRNA, where it nucleates assembly of the 50S subunit. This chain is Large ribosomal subunit protein uL3, found in Dehalococcoides mccartyi (strain ATCC BAA-2100 / JCM 16839 / KCTC 5957 / BAV1).